The sequence spans 240 residues: 4-hydroxy-tetrahydrodipicolinate reductase (240 aa).

NAD(+) contacts are provided by residues 79–81 (ATT) and 103–106 (SANM). The active-site Proton donor/acceptor is His-135. His-136 is a binding site for (S)-2,3,4,5-tetrahydrodipicolinate. Lys-139 functions as the Proton donor in the catalytic mechanism. 145–146 (GT) provides a ligand contact to (S)-2,3,4,5-tetrahydrodipicolinate.

The protein belongs to the DapB family.

It is found in the cytoplasm. The catalysed reaction is (S)-2,3,4,5-tetrahydrodipicolinate + NAD(+) + H2O = (2S,4S)-4-hydroxy-2,3,4,5-tetrahydrodipicolinate + NADH + H(+). It carries out the reaction (S)-2,3,4,5-tetrahydrodipicolinate + NADP(+) + H2O = (2S,4S)-4-hydroxy-2,3,4,5-tetrahydrodipicolinate + NADPH + H(+). The protein operates within amino-acid biosynthesis; L-lysine biosynthesis via DAP pathway; (S)-tetrahydrodipicolinate from L-aspartate: step 4/4. Catalyzes the conversion of 4-hydroxy-tetrahydrodipicolinate (HTPA) to tetrahydrodipicolinate. The chain is 4-hydroxy-tetrahydrodipicolinate reductase from Staphylococcus aureus (strain JH1).